We begin with the raw amino-acid sequence, 562 residues long: Aureusidin synthase (562 aa).

2 cysteine pairs are disulfide-bonded: Cys71–Cys86 and Cys85–Cys148. Cu cation contacts are provided by His147, His168, His177, His301, His305, and His335. Residues Cys151–His168 constitute a cross-link (2'-(S-cysteinyl)-histidine (Cys-His)).

The protein belongs to the tyrosinase family. Monomer. It depends on Cu(2+) as a cofactor. Post-translationally, glycosylated. Contains probably N- and C-terminal propeptides. As to expression, expressed in petals. Not detected in stems and leaves.

The protein localises to the vacuole lumen. It carries out the reaction 2',4,4',6'-tetrahydroxychalcone 4'-O-beta-D-glucoside + O2 = aureusidin 6-O-beta-glucoside + H2O. The catalysed reaction is 2 2',3,4,4',6'-pentahydroxychalcone 4'-O-beta-D-glucoside + O2 + 2 H(+) = 2 aureusidin 6-O-beta-glucoside + 2 H2O. The enzyme catalyses 2',3,4,4',6'-pentahydroxychalcone 4'-O-beta-D-glucoside + O2 + H(+) = bracteatin 6-O-beta-glucoside + H2O. H(2)O(2) activates the 3-hydroxylation and oxidative cyclization of tetrahydroxychalcone but inhibits reaction with pentahydroxychalcone. Inhibited by phenylthiourea. Functionally, involved in the biosynthesis of aurones, plant flavonoids that provide yellow coloration to flowers. Can use tetrahydroxychalcone (THC), pentahydroxychalcone (PHC), THC 4'-glucoside and PHC 4'-glucoside as substrates, but not 2'-hydroxychalcone, 4-hydroxychalcone, PHC 3-glucoside, 2',6'-dihydroxy-4,4'-dimethoxychalcone, naringenin, eriodictyol and 4,4',6-trihydroxyaurone. Can also produce bracteatin from PHC. The sequence is that of Aureusidin synthase (AS1) from Antirrhinum majus (Garden snapdragon).